Consider the following 423-residue polypeptide: uncharacterized protein (423 aa).

The region spanning 75–145 (LHVVVTQPIA…PIVNNIKVAG (71 aa)) is the BON domain.

This sequence belongs to the bacterial secretin family.

Involved in the secretion of an unknown compound. This is an uncharacterized protein from Sinorhizobium fredii (strain NBRC 101917 / NGR234).